The sequence spans 294 residues: sn-glycerol-3-phosphate transport system permease protein UgpA (294 aa).

Topologically, residues 1-11 (MSPSRPGFSCS) are cytoplasmic. The chain crosses the membrane as a helical span at residues 12 to 32 (WLPYLLVLPQLAITAIFFLWP). The Periplasmic portion of the chain corresponds to 33-80 (AGEALWYSVQTLDPFGLSSEFVGLSNFIQLFQDEYYLASFYTTLIFSA). The ABC transmembrane type-1 domain maps to 72 to 284 (FYTTLIFSAL…LLVIGLTVIQ (213 aa)). A helical membrane pass occupies residues 81–101 (LVAGIGLNVSLFLAAMVDYVL). At 102 to 109 (RGSRLYQT) the chain is on the cytoplasmic side. Residues 110 to 130 (LLILPYAVAPAVAAVLWIFLF) traverse the membrane as a helical segment. Residues 131–157 (DPGLGLITHALAKLGYSWNHAQNSGQA) are Periplasmic-facing. A helical membrane pass occupies residues 158–178 (MFLVVLASVWKQISYNFLFFL). Over 179-207 (AALQSIPKSLVEAAAIDGAGPVRRFFNLV) the chain is Cytoplasmic. The chain crosses the membrane as a helical span at residues 208 to 228 (LPLISPVSFFLLVVNLVYAFF). Topologically, residues 229–262 (DTFPVIDAATGGGPVQATTTLIYKIYREGFAGLD) are periplasmic. Residues 263 to 283 (LSSSAAQSVILMLLVIGLTVI) form a helical membrane-spanning segment. The Cytoplasmic portion of the chain corresponds to 284–294 (QFRFVERKVRY).

The protein belongs to the binding-protein-dependent transport system permease family. UgpAE subfamily. The complex is composed of two ATP-binding proteins (UgpC), two transmembrane proteins (UgpA and UgpE) and a solute-binding protein (UgpB).

The protein localises to the cell inner membrane. Part of the ABC transporter complex UgpBAEC involved in sn-glycerol-3-phosphate (G3P) import. Probably responsible for the translocation of the substrate across the membrane. The chain is sn-glycerol-3-phosphate transport system permease protein UgpA (ugpA) from Yersinia pseudotuberculosis serotype I (strain IP32953).